Here is a 315-residue protein sequence, read N- to C-terminus: Long form salivary protein D7L1 (315 aa).

Residues 1 to 18 form the signal peptide; it reads MIIVAVLLSFLAHLLVQA. Intrachain disulfides connect cysteine 37/cysteine 73 and cysteine 69/cysteine 128. Tryptophan 55 lines the thromboxane A2 pocket. Tryptophan 58 is a leukotriene C4 binding site. Tyrosine 70 provides a ligand contact to thromboxane A2. Leukotriene C4-binding residues include glycine 152 and lysine 170. Lysine 170 provides a ligand contact to thromboxane A2. 2 cysteine pairs are disulfide-bonded: cysteine 178–cysteine 211 and cysteine 252–cysteine 263.

Belongs to the PBP/GOBP family. As to expression, distal-lateral and median lobes of female salivary gland (at protein level). Not detected in male salivary gland (at protein level). Expressed in female salivary gland. Not detected in female carcass without salivary glands. Expressed in male salivary gland and other tissues.

It is found in the secreted. Modulates blood feeding of female mosquitoes on vertebrate species by binding and sequestering different mediators involved in the host response. Binds leukotriene C4, leukotriene D4, leukotriene E4 and stable analogs of thromboxane A2, U-46619 and carbocyclic TXA2. Binds weakly prostaglandins: PGD2, PGE2 and PGF2alpha. Does not bind leukotriene B4, biogenic amines, ADP, platelet activating phospholipid derivative PAF and arachidonic acid. Inhibits agonist-induced smooth muscle contraction. Inhibits platelet aggregation induced by low concentrations of collagen in thromboxane A2-dependent manner. This chain is Long form salivary protein D7L1, found in Anopheles stephensi (Indo-Pakistan malaria mosquito).